Here is a 456-residue protein sequence, read N- to C-terminus: Trigger factor (456 aa).

A PPIase FKBP-type domain is found at 192-277 (GDTVVIDFVG…IHEVKTKEVP (86 aa)).

The protein belongs to the FKBP-type PPIase family. Tig subfamily.

It is found in the cytoplasm. The enzyme catalyses [protein]-peptidylproline (omega=180) = [protein]-peptidylproline (omega=0). Its function is as follows. Involved in protein export. Acts as a chaperone by maintaining the newly synthesized protein in an open conformation. Functions as a peptidyl-prolyl cis-trans isomerase. This chain is Trigger factor, found in Streptococcus pyogenes serotype M4 (strain MGAS10750).